Here is a 164-residue protein sequence, read N- to C-terminus: CASP-like protein 1C2 (164 aa).

Residues 1-8 (MAVELKKV) are Cytoplasmic-facing. Residues 9–29 (FSTILRFLALAATVVAVIVMI) form a helical membrane-spanning segment. Residues 30–53 (RSHDSAIVLNLTFSAKYNNTPAFK) lie on the Extracellular side of the membrane. Asn-39 carries N-linked (GlcNAc...) asparagine glycosylation. A helical transmembrane segment spans residues 54 to 74 (YFVIAEGIASVYTIIVIFLWS). Residues 75 to 80 (KGLLGR) lie on the Cytoplasmic side of the membrane. Residues 81 to 101 (LIVILDMVTTVLLTSSISAAL) form a helical membrane-spanning segment. The Extracellular segment spans residues 102–129 (AIAQVGKKGNSHAGWLPVCGQVPKFCDQ). Residues 130–150 (AIIALVAGFVAAIVYFMLLLC) form a helical membrane-spanning segment. The Cytoplasmic segment spans residues 151 to 164 (SLHAVLTPIFAVKP).

This sequence belongs to the Casparian strip membrane proteins (CASP) family. In terms of assembly, homodimer and heterodimers.

Its subcellular location is the cell membrane. In Ricinus communis (Castor bean), this protein is CASP-like protein 1C2.